Reading from the N-terminus, the 433-residue chain is Homogentisate 1,2-dioxygenase (433 aa).

His-288 (proton acceptor) is an active-site residue. Residues His-331 and Glu-337 each coordinate Fe cation. 2 residues coordinate homogentisate: Tyr-346 and His-367. Residue His-367 participates in Fe cation binding.

This sequence belongs to the homogentisate dioxygenase family. Hexamer; dimer of trimers. Requires Fe cation as cofactor.

The enzyme catalyses homogentisate + O2 = 4-maleylacetoacetate + H(+). It functions in the pathway amino-acid degradation; L-phenylalanine degradation; acetoacetate and fumarate from L-phenylalanine: step 4/6. Functionally, involved in the catabolism of homogentisate (2,5-dihydroxyphenylacetate or 2,5-OH-PhAc), a central intermediate in the degradation of phenylalanine and tyrosine. Catalyzes the oxidative ring cleavage of the aromatic ring of homogentisate to yield maleylacetoacetate. The polypeptide is Homogentisate 1,2-dioxygenase (Pseudomonas entomophila (strain L48)).